A 440-amino-acid polypeptide reads, in one-letter code: Ribosomal protein uS12 methylthiotransferase RimO (440 aa).

The 111-residue stretch at 6–116 folds into the MTTase N-terminal domain; that stretch reads PKVGFVSLGC…VVTAVHEVVP (111 aa). Residues C15, C51, C80, C149, C153, and C156 each contribute to the [4Fe-4S] cluster site. A Radical SAM core domain is found at 135 to 373; sequence LTPRHYAYLK…MAHQQAISAA (239 aa). A TRAM domain is found at 376–440; the sequence is QLKVGKEIEV…DEYDLWAELV (65 aa).

This sequence belongs to the methylthiotransferase family. RimO subfamily. [4Fe-4S] cluster is required as a cofactor.

The protein resides in the cytoplasm. It carries out the reaction L-aspartate(89)-[ribosomal protein uS12]-hydrogen + (sulfur carrier)-SH + AH2 + 2 S-adenosyl-L-methionine = 3-methylsulfanyl-L-aspartate(89)-[ribosomal protein uS12]-hydrogen + (sulfur carrier)-H + 5'-deoxyadenosine + L-methionine + A + S-adenosyl-L-homocysteine + 2 H(+). In terms of biological role, catalyzes the methylthiolation of an aspartic acid residue of ribosomal protein uS12. The polypeptide is Ribosomal protein uS12 methylthiotransferase RimO (Pseudomonas aeruginosa (strain UCBPP-PA14)).